We begin with the raw amino-acid sequence, 221 residues long: MNNQLLHLMHLVSPALPVGAYAYSQGLEYAVDSGWLAEPGKLQQWITGVLEHSVGHLDLPVLLRLYRAWDAAALDEVDRWNDFVRANRETAELLLEDEQLGLALQRLSVSLQTKGADTPLSSPPCFVTQFALAGVRRHIAEEDLLYGFAWSWLENQVAAATKIVPLGQTQAQQTLVAMMEKIPAVCAHALRLQDEELGVGLPALAMASSRHERQYSRLFRS.

Belongs to the UreF family. UreD, UreF and UreG form a complex that acts as a GTP-hydrolysis-dependent molecular chaperone, activating the urease apoprotein by helping to assemble the nickel containing metallocenter of UreC. The UreE protein probably delivers the nickel.

The protein localises to the cytoplasm. Required for maturation of urease via the functional incorporation of the urease nickel metallocenter. This Teredinibacter turnerae (strain ATCC 39867 / T7901) protein is Urease accessory protein UreF.